The sequence spans 432 residues: Phosphoprotein associated with glycosphingolipid-enriched microdomains 1 (432 aa).

Residues 1-16 (MGPAGSLLGSGQMQIT) are Extracellular-facing. A helical; Signal-anchor for type III membrane protein transmembrane segment spans residues 17 to 37 (LWGSLAAVAIFFVITFLIFLC). S-palmitoyl cysteine attachment occurs at residues C37 and C40. The Cytoplasmic segment spans residues 38-432 (SSCDREKKPR…LQQGRDITRL (395 aa)). S50 and S61 each carry phosphoserine. At Y105 the chain carries Phosphotyrosine; by LYN. Residues 110 to 122 (TSASDLLDSQDST) are compositionally biased toward polar residues. A disordered region spans residues 110–137 (TSASDLLDSQDSTGKPKCHQSRELPRIP). 3 positions are modified to phosphotyrosine: Y163, Y181, and Y227. Disordered stretches follow at residues 197–230 (EKGH…YASV) and 244–432 (SILG…ITRL). Positions 220–230 (GKAEFAEYASV) are enriched in basic and acidic residues. The residue at position 229 (S229) is a Phosphoserine. Over residues 316 to 356 (MYSSVNKPGQLVNKSGQSLTVPESTYTSIQGDPQRSPSSCN) the composition is skewed to polar residues. A Phosphotyrosine; by FYN and LYN modification is found at Y317. The interaction with CSK stretch occupies residues 317-320 (YSSV). S354 is modified (phosphoserine). At Y359 the chain carries Phosphotyrosine. The residue at position 380 (S380) is a Phosphoserine. 2 positions are modified to phosphotyrosine: Y387 and Y417. The interval 430–432 (TRL) is interaction with NHERF1.

As to quaternary structure, interacts with FYN. When phosphorylated, interacts with CSK. Interacts with NHERF1/EBP50. In resting T-cells, part of a PAG1-NHERF1-MSN complex which is disrupted upon TCR activation. Interacts with LYN on plasma membrane lipid rafts. Identified in a complex with LYN and STAT3. Post-translationally, palmitoylated. In terms of processing, phosphorylated by FYN on Tyr-317 in resting T-cells; which promotes interaction with CSK. Dephosphorylated by PTPRC/CD45 upon TCR activation; which leads to CSK dissociation. May also be dephosphorylated by PTPN11. Hyperphosphorylated in mast cells upon FCER1 activation. Phosphorylated by LYN. As to expression, ubiquitously expressed. Present in germinal center B-cells, plasma cells, T-cells, monocytes and platelets (at protein level).

Its subcellular location is the cell membrane. Negatively regulates TCR (T-cell antigen receptor)-mediated signaling in T-cells and FCER1 (high affinity immunoglobulin epsilon receptor)-mediated signaling in mast cells. Promotes CSK activation and recruitment to lipid rafts, which results in LCK inhibition. Inhibits immunological synapse formation by preventing dynamic arrangement of lipid raft proteins. May be involved in cell adhesion signaling. In Homo sapiens (Human), this protein is Phosphoprotein associated with glycosphingolipid-enriched microdomains 1 (PAG1).